A 173-amino-acid polypeptide reads, in one-letter code: Alpha-crystallin A chain (173 aa).

M1 is subject to N-acetylmethionine. One can recognise a sHSP domain in the interval 53 to 164 (NFLDSSNSGM…GDRSIPVTRD (112 aa)). H101, E103, and H108 together coordinate Zn(2+). A disulfide bridge links C132 with C143. Positions 143–173 (CGPKSGGSESGRGDRSIPVTRDDKTNSTPSS) are disordered. The span at 153–167 (GRGDRSIPVTRDDKT) shows a compositional bias: basic and acidic residues.

It belongs to the small heat shock protein (HSP20) family. In terms of assembly, heteropolymer composed of three CRYAA and one CRYAB subunits. Inter-subunit bridging via zinc ions enhances stability, which is crucial as there is no protein turn over in the lens. Zinc coordination is achieved at least by His-101, Glu-103 and His-108. His-101 and Glu-103 come from the same molecule within the oligomer, while His-108 residue is provided by another molecule. Can also form homodimers and homotetramers (dimers of dimers) which serve as the building blocks of homooligomers. Part of a complex required for lens intermediate filament formation composed of BFSP1, BFSP2 and CRYAA.

The protein resides in the cytoplasm. The protein localises to the nucleus. Its function is as follows. Contributes to the transparency and refractive index of the lens. May act as a chaperone, preventing aggregation of various proteins under a wide range of stress conditions. This Psalidodon fasciatus (Banded astyanax) protein is Alpha-crystallin A chain (cryaa).